The sequence spans 181 residues: Oligoribonuclease (181 aa).

The 164-residue stretch at leucine 8–leucine 171 folds into the Exonuclease domain. Tyrosine 129 is a catalytic residue.

Belongs to the oligoribonuclease family.

The protein resides in the cytoplasm. Functionally, 3'-to-5' exoribonuclease specific for small oligoribonucleotides. This is Oligoribonuclease from Shigella flexneri.